We begin with the raw amino-acid sequence, 156 residues long: ATP synthase subunit b (156 aa).

The helical transmembrane segment at 11 to 31 (LIAFALFVWFCMKFVWPPIIN) threads the bilayer.

It belongs to the ATPase B chain family. As to quaternary structure, F-type ATPases have 2 components, F(1) - the catalytic core - and F(0) - the membrane proton channel. F(1) has five subunits: alpha(3), beta(3), gamma(1), delta(1), epsilon(1). F(0) has three main subunits: a(1), b(2) and c(10-14). The alpha and beta chains form an alternating ring which encloses part of the gamma chain. F(1) is attached to F(0) by a central stalk formed by the gamma and epsilon chains, while a peripheral stalk is formed by the delta and b chains.

Its subcellular location is the cell inner membrane. In terms of biological role, f(1)F(0) ATP synthase produces ATP from ADP in the presence of a proton or sodium gradient. F-type ATPases consist of two structural domains, F(1) containing the extramembraneous catalytic core and F(0) containing the membrane proton channel, linked together by a central stalk and a peripheral stalk. During catalysis, ATP synthesis in the catalytic domain of F(1) is coupled via a rotary mechanism of the central stalk subunits to proton translocation. Component of the F(0) channel, it forms part of the peripheral stalk, linking F(1) to F(0). In Haemophilus influenzae (strain PittEE), this protein is ATP synthase subunit b.